Consider the following 364-residue polypeptide: Chorismate synthase (364 aa).

Arg-48 is an NADP(+) binding site. FMN-binding positions include 125–127 (RSS), 237–238 (NA), Gly-277, 292–296 (KPTSS), and Arg-318.

It belongs to the chorismate synthase family. In terms of assembly, homotetramer. It depends on FMNH2 as a cofactor.

The enzyme catalyses 5-O-(1-carboxyvinyl)-3-phosphoshikimate = chorismate + phosphate. The protein operates within metabolic intermediate biosynthesis; chorismate biosynthesis; chorismate from D-erythrose 4-phosphate and phosphoenolpyruvate: step 7/7. In terms of biological role, catalyzes the anti-1,4-elimination of the C-3 phosphate and the C-6 proR hydrogen from 5-enolpyruvylshikimate-3-phosphate (EPSP) to yield chorismate, which is the branch point compound that serves as the starting substrate for the three terminal pathways of aromatic amino acid biosynthesis. This reaction introduces a second double bond into the aromatic ring system. In Albidiferax ferrireducens (strain ATCC BAA-621 / DSM 15236 / T118) (Rhodoferax ferrireducens), this protein is Chorismate synthase.